The primary structure comprises 815 residues: Calpain-3 (815 aa).

The interval 7-36 is disordered; it reads ASVAPRTAAEPRSPGPVPHPAQSKATEAGG. Positions 74-417 constitute a Calpain catalytic domain; that stretch reads LYVDPEFPPD…FTKLEICNLT (344 aa). Catalysis depends on residues Cys-129, His-334, and Asn-358. A domain III region spans residues 418–586; sequence ADALQSDKLQ…KRNLSEEVEN (169 aa). A linker region spans residues 587 to 649; sequence TISVDRPVPI…QESEEQQQFR (63 aa). Residues 605–646 form a disordered region; it reads SNKELGVDQESEEGKGKTSPDKQEQSPQPQPGSSDQESEEQQ. The segment covering 616–628 has biased composition (basic and acidic residues); the sequence is EEGKGKTSPDKQE. The span at 629–639 shows a compositional bias: low complexity; sequence QSPQPQPGSSD. 4 EF-hand domains span residues 643–677, 686–719, 716–751, and 781–815; these read EEQQ…VVNK, FTLE…NKIK, NKIK…AGFH, and VRLE…TMYA. The interval 650 to 815 is domain IV; that stretch reads NIFKQIAGDD…LEWLQLTMYA (166 aa). 18 residues coordinate Ca(2+): Ala-656, Asp-659, Glu-661, Glu-666, Asp-699, Asp-701, Ser-703, Lys-705, Glu-710, Asp-729, Asp-731, Ser-733, Thr-735, Glu-740, Asp-794, Asp-796, Asp-798, and Ile-800.

Belongs to the peptidase C2 family. Homodimer; via EF-hand domain 4. Interacts with TTN/titin. Interacts with CMYA5; this interaction, which results in CMYA5 proteolysis, may protect CAPN3 from autolysis. Interacts with SIMC1. Interacts with UTP25; the interaction is required for CAPN3 translocation to the nucleolus.

The protein localises to the cytoplasm. It is found in the nucleus. Its subcellular location is the nucleolus. The catalysed reaction is Broad endopeptidase activity.. Its activity is regulated as follows. Activated by micromolar concentrations of calcium and inhibited by calpastatin. Functionally, calcium-regulated non-lysosomal thiol-protease. Proteolytically cleaves CTBP1. Mediates, with UTP25, the proteasome-independent degradation of p53/TP53. The sequence is that of Calpain-3 (CAPN3) from Macaca fascicularis (Crab-eating macaque).